We begin with the raw amino-acid sequence, 156 residues long: RING finger protein 224 (156 aa).

The RING-type zinc finger occupies 24-71 (CIICCSAYDLSGHLPRRLYCGHTFCQACVRRLDTPAPEQRWIPCPQCR).

This is RING finger protein 224 (RNF224) from Homo sapiens (Human).